The following is a 536-amino-acid chain: Chromosomal replication initiator protein DnaA (536 aa).

Residues 1–72 (MNDFWQHCSA…DLARDFWNAP (72 aa)) are domain I, interacts with DnaA modulators. Residues 72–199 (PIEVQFVLDP…EAADSMYERS (128 aa)) form a domain II region. Residues 97–121 (RAPLPAANPAPVTAGPAPSGAADAN) form a disordered region. Over residues 105–121 (PAPVTAGPAPSGAADAN) the composition is skewed to low complexity. The segment at 200–416 (KLNPVLTFDN…GALRKILAYS (217 aa)) is domain III, AAA+ region. 4 residues coordinate ATP: Gly244, Gly246, Lys247, and Thr248. The interval 417–536 (KFHGREITIE…LHVLEQTLKG (120 aa)) is domain IV, binds dsDNA.

This sequence belongs to the DnaA family. As to quaternary structure, oligomerizes as a right-handed, spiral filament on DNA at oriC.

Its subcellular location is the cytoplasm. Its function is as follows. Plays an essential role in the initiation and regulation of chromosomal replication. ATP-DnaA binds to the origin of replication (oriC) to initiate formation of the DNA replication initiation complex once per cell cycle. Binds the DnaA box (a 9 base pair repeat at the origin) and separates the double-stranded (ds)DNA. Forms a right-handed helical filament on oriC DNA; dsDNA binds to the exterior of the filament while single-stranded (ss)DNA is stabiized in the filament's interior. The ATP-DnaA-oriC complex binds and stabilizes one strand of the AT-rich DNA unwinding element (DUE), permitting loading of DNA polymerase. After initiation quickly degrades to an ADP-DnaA complex that is not apt for DNA replication. Binds acidic phospholipids. This Burkholderia thailandensis (strain ATCC 700388 / DSM 13276 / CCUG 48851 / CIP 106301 / E264) protein is Chromosomal replication initiator protein DnaA.